The chain runs to 489 residues: FAD-linked oxidoreductase tazG (489 aa).

An N-terminal signal peptide occupies residues methionine 1 to alanine 17. N-linked (GlcNAc...) asparagine glycosylation occurs at asparagine 38. An FAD-binding PCMH-type domain is found at alanine 55–valine 224. Asparagine 242 and asparagine 306 each carry an N-linked (GlcNAc...) asparagine glycan.

It belongs to the oxygen-dependent FAD-linked oxidoreductase family. The cofactor is FAD.

It participates in secondary metabolite biosynthesis. Its function is as follows. FAD-linked oxidoreductase; part of the gene cluster that mediates the biosynthesis of azaterrilone A and other azaphilones, a class of fungal metabolites characterized by a highly oxygenated pyrano-quinone bicyclic core and exhibiting a broad range of bioactivities. The first step of the pathway begins with the non-reducing polyketide synthase tazA that assembles one acetyl-CoA starter unit, five malonyl-CoA units, and catalyzes a series of Claisen condensations, methylation, PT-mediated cyclization, and finally releases the first hexaketide precursor through the R-domain. The tazA product then undergoes reduction on its terminal ketone and the following pyran-ring formation by yet undetermined enzyme(s). Dehydration and enoyl reduction, possibly involving the trans-enoyl reductase tazE leads to the next intermediate. TazD is predicted as an acetyltransferase and might catalyze the acetylation steps leading to the synthesis of azaterrilone A. Azaterrilone A is not the final product of the taz pathway and both the highly reducing polyketide synthase tazB and the dual enzyme tazHJ catalyze late steps of the pathway, leading to the production of the 2 final stereoisomers that contain additional polyketide modification whose structures have still to be determined. This is FAD-linked oxidoreductase tazG from Aspergillus terreus (strain NIH 2624 / FGSC A1156).